Consider the following 85-residue polypeptide: CRISPR-associated endoribonuclease Cas2 (85 aa).

Aspartate 8 is a Mg(2+) binding site.

Belongs to the CRISPR-associated endoribonuclease Cas2 protein family. In terms of assembly, homodimer, forms a heterotetramer with a Cas1 homodimer. Requires Mg(2+) as cofactor.

Functionally, CRISPR (clustered regularly interspaced short palindromic repeat), is an adaptive immune system that provides protection against mobile genetic elements (viruses, transposable elements and conjugative plasmids). CRISPR clusters contain sequences complementary to antecedent mobile elements and target invading nucleic acids. CRISPR clusters are transcribed and processed into CRISPR RNA (crRNA). Functions as a ssRNA-specific endoribonuclease. Involved in the integration of spacer DNA into the CRISPR cassette. In Thermococcus kodakarensis (strain ATCC BAA-918 / JCM 12380 / KOD1) (Pyrococcus kodakaraensis (strain KOD1)), this protein is CRISPR-associated endoribonuclease Cas2.